The following is a 105-amino-acid chain: DNA-directed RNA polymerase subunit omega (105 aa).

Belongs to the RNA polymerase subunit omega family. As to quaternary structure, the RNAP catalytic core consists of 2 alpha, 1 beta, 1 beta' and 1 omega subunit. When a sigma factor is associated with the core the holoenzyme is formed, which can initiate transcription.

It carries out the reaction RNA(n) + a ribonucleoside 5'-triphosphate = RNA(n+1) + diphosphate. Its function is as follows. Promotes RNA polymerase assembly. Latches the N- and C-terminal regions of the beta' subunit thereby facilitating its interaction with the beta and alpha subunits. The chain is DNA-directed RNA polymerase subunit omega from Streptococcus equi subsp. zooepidemicus (strain MGCS10565).